Consider the following 150-residue polypeptide: Large ribosomal subunit protein uL11 (150 aa).

The protein belongs to the universal ribosomal protein uL11 family. In terms of assembly, part of the ribosomal stalk of the 50S ribosomal subunit. Interacts with L10 and the large rRNA to form the base of the stalk. L10 forms an elongated spine to which L12 dimers bind in a sequential fashion forming a multimeric L10(L12)X complex. One or more lysine residues are methylated.

Its function is as follows. Forms part of the ribosomal stalk which helps the ribosome interact with GTP-bound translation factors. In Cereibacter sphaeroides (strain KD131 / KCTC 12085) (Rhodobacter sphaeroides), this protein is Large ribosomal subunit protein uL11.